The following is a 303-amino-acid chain: tRNA pseudouridine synthase B (303 aa).

The active-site Nucleophile is the aspartate 47.

Belongs to the pseudouridine synthase TruB family. Type 1 subfamily.

It catalyses the reaction uridine(55) in tRNA = pseudouridine(55) in tRNA. Responsible for synthesis of pseudouridine from uracil-55 in the psi GC loop of transfer RNAs. In Legionella pneumophila subsp. pneumophila (strain Philadelphia 1 / ATCC 33152 / DSM 7513), this protein is tRNA pseudouridine synthase B.